The sequence spans 99 residues: Small ribosomal subunit protein bS20 (99 aa).

Belongs to the bacterial ribosomal protein bS20 family.

Binds directly to 16S ribosomal RNA. The sequence is that of Small ribosomal subunit protein bS20 from Caldicellulosiruptor saccharolyticus (strain ATCC 43494 / DSM 8903 / Tp8T 6331).